The primary structure comprises 793 residues: Sucrose synthase (793 aa).

Residues 263 to 742 (MISRILIVSI…ALARVAERYT (480 aa)) form a GT-B glycosyltransferase region.

Belongs to the glycosyltransferase 1 family. In terms of assembly, homotetramer.

It catalyses the reaction an NDP-alpha-D-glucose + D-fructose = a ribonucleoside 5'-diphosphate + sucrose + H(+). The enzyme catalyses ADP-alpha-D-glucose + D-fructose = sucrose + ADP + H(+). Functionally, catalyzes the reversible conversion of sucrose and a nucleotide disphosphate (NDP) into fructose and NDP-glucose; although the reaction is freely reversible in vitro, the physiological reaction seems to be sucrose cleavage. Unlike characterized plant enzymes prefers ADP as a cosubstrate, whereas plants prefer UDP. The KM for sucrose is 45-fold lower in the presence of ADP than UDP. Its preference for ADP over UDP suggests it may directly link sucrose and glycogen metabolism. In Acidithiobacillus caldus (strain ATCC 51756 / DSM 8584 / KU), this protein is Sucrose synthase.